The following is a 364-amino-acid chain: L-carnitine dehydrogenase (364 aa).

11–16 is a binding site for NAD(+); sequence GGGVIG. Residues 336 to 364 are disordered; that stretch reads KPAASTAAEKAKASKPVKKAEKPKKKKKG. The span at 348 to 364 shows a compositional bias: basic residues; it reads ASKPVKKAEKPKKKKKG.

It belongs to the 3-hydroxyacyl-CoA dehydrogenase family. L-carnitine dehydrogenase subfamily. As to quaternary structure, homodimer.

It is found in the cytoplasm. The enzyme catalyses carnitine + NAD(+) = 3-dehydrocarnitine + NADH + H(+). It functions in the pathway amine and polyamine metabolism; carnitine metabolism. In terms of biological role, catalyzes the NAD(+)-dependent oxidation of L-carnitine to 3-dehydrocarnitine. This Mesorhizobium japonicum (strain LMG 29417 / CECT 9101 / MAFF 303099) (Mesorhizobium loti (strain MAFF 303099)) protein is L-carnitine dehydrogenase.